The primary structure comprises 320 residues: Cytochrome f (320 aa).

An N-terminal signal peptide occupies residues 1-35 (MQTRNTFSWIREEITRSISVSLMIYIITWASISSA). 4 residues coordinate heme: Tyr36, Cys56, Cys59, and His60. A helical membrane pass occupies residues 286-305 (VQGLLFFLGSVVLAQIFLVL).

This sequence belongs to the cytochrome f family. In terms of assembly, the 4 large subunits of the cytochrome b6-f complex are cytochrome b6, subunit IV (17 kDa polypeptide, petD), cytochrome f and the Rieske protein, while the 4 small subunits are PetG, PetL, PetM and PetN. The complex functions as a dimer. The cofactor is heme. Post-translationally, purified from leaves as a water-soluble monomeric protein with a mass of 28.16 kDa, cleavage occurs after Gln-287 and separates the heme-binding from the membrane.

It localises to the plastid. The protein localises to the chloroplast thylakoid membrane. Its function is as follows. Component of the cytochrome b6-f complex, which mediates electron transfer between photosystem II (PSII) and photosystem I (PSI), cyclic electron flow around PSI, and state transitions. The polypeptide is Cytochrome f (petA) (Brassica rapa subsp. rapa (Turnip)).